Here is a 380-residue protein sequence, read N- to C-terminus: Ceramide-binding protein svf1 (380 aa).

Residues 1–18 (MKAWLQSSISYYTGTAEP) form a peripherally associates with membranes region.

It belongs to the SVF1 family.

The protein resides in the golgi apparatus. It is found in the cis-Golgi network membrane. The protein localises to the endoplasmic reticulum membrane. Its subcellular location is the cytoplasm. It localises to the nucleus. In terms of biological role, ceramide-binding protein that may transfer ceramides from the endoplasmic reticulum membrane to the cis-Golgi network membrane, and is thereby required for the biosynthesis of complex sphingolipids. This chain is Ceramide-binding protein svf1, found in Schizosaccharomyces pombe (strain 972 / ATCC 24843) (Fission yeast).